The following is a 223-amino-acid chain: Deoxyribose-phosphate aldolase (223 aa).

The Proton donor/acceptor role is filled by aspartate 92. Lysine 153 acts as the Schiff-base intermediate with acetaldehyde in catalysis. Lysine 182 serves as the catalytic Proton donor/acceptor.

The protein belongs to the DeoC/FbaB aldolase family. DeoC type 1 subfamily.

The protein resides in the cytoplasm. It carries out the reaction 2-deoxy-D-ribose 5-phosphate = D-glyceraldehyde 3-phosphate + acetaldehyde. It functions in the pathway carbohydrate degradation; 2-deoxy-D-ribose 1-phosphate degradation; D-glyceraldehyde 3-phosphate and acetaldehyde from 2-deoxy-alpha-D-ribose 1-phosphate: step 2/2. In terms of biological role, catalyzes a reversible aldol reaction between acetaldehyde and D-glyceraldehyde 3-phosphate to generate 2-deoxy-D-ribose 5-phosphate. The sequence is that of Deoxyribose-phosphate aldolase from Mycoplasmoides gallisepticum (strain R(low / passage 15 / clone 2)) (Mycoplasma gallisepticum).